Consider the following 311-residue polypeptide: Methionyl-tRNA formyltransferase (311 aa).

Residue 110-113 (SLLP) coordinates (6S)-5,6,7,8-tetrahydrofolate.

This sequence belongs to the Fmt family.

The enzyme catalyses L-methionyl-tRNA(fMet) + (6R)-10-formyltetrahydrofolate = N-formyl-L-methionyl-tRNA(fMet) + (6S)-5,6,7,8-tetrahydrofolate + H(+). Attaches a formyl group to the free amino group of methionyl-tRNA(fMet). The formyl group appears to play a dual role in the initiator identity of N-formylmethionyl-tRNA by promoting its recognition by IF2 and preventing the misappropriation of this tRNA by the elongation apparatus. This is Methionyl-tRNA formyltransferase from Streptococcus agalactiae serotype Ia (strain ATCC 27591 / A909 / CDC SS700).